The following is a 375-amino-acid chain: MSDRGYYEVLGVSKGASDDEIKSAYRKLAIKYHPDKNKGDKEAEEKFKEATEAYEVLRDPQKRQAYDQFGKAGVNAGAGGGYGAGAYTDFSDIFGDFGDIFSEFFGGGGGGGSRGGGRRSGPQRGSDLRYNLEVSLEDAALGKEYKIEIPRLETCVDCTGSGASKGSSPTVCPDCSGTGQVRRTQGFFSVTTTCPRCKGKGKVISNPCKTCKGEGLTEKRRTIHIKIPAGVESGSRLKVSGEGESGPNGGPSGDLYVVTHIKKHPVFERQGNDLIVQKSISLSMACLGGEIEVPSIDGKTIQLKIPEGTESGQIFRLKGHGIPYLGSYGKGDQHVIIKVEIPKKLSKKQKELMEEFARESGEKVGSGGKSKLFFR.

Residues 5 to 70 form the J domain; the sequence is GYYEVLGVSK…QKRQAYDQFG (66 aa). A CR-type zinc finger spans residues 142-220; sequence GKEYKIEIPR…CKGEGLTEKR (79 aa). Residues C155, C158, C172, C175, C194, C197, C208, and C211 each contribute to the Zn(2+) site. CXXCXGXG motif repeat units follow at residues 155–162, 172–179, 194–201, and 208–215; these read CVDCTGSG, CPDCSGTG, CPRCKGKG, and CKTCKGEG.

It belongs to the DnaJ family. As to quaternary structure, homodimer. Requires Zn(2+) as cofactor.

Its subcellular location is the cytoplasm. Participates actively in the response to hyperosmotic and heat shock by preventing the aggregation of stress-denatured proteins and by disaggregating proteins, also in an autonomous, DnaK-independent fashion. Unfolded proteins bind initially to DnaJ; upon interaction with the DnaJ-bound protein, DnaK hydrolyzes its bound ATP, resulting in the formation of a stable complex. GrpE releases ADP from DnaK; ATP binding to DnaK triggers the release of the substrate protein, thus completing the reaction cycle. Several rounds of ATP-dependent interactions between DnaJ, DnaK and GrpE are required for fully efficient folding. Also involved, together with DnaK and GrpE, in the DNA replication of plasmids through activation of initiation proteins. The sequence is that of Chaperone protein DnaJ from Leptospira biflexa serovar Patoc (strain Patoc 1 / Ames).